The following is a 152-amino-acid chain: MLELDLQRASQQPAPSDEQFRQWCELALRQRTADSELTIRLVDEAEGRELNHTWRHKDYATNVLSFPADVPDELLDIPLLGDLVICIAVVEREAAEQGKELQAHWAHLVIHGCLHLLGYDHIDDDEAEEMEALERTLLAELGHPDPYADDES.

Positions 111, 115, and 121 each coordinate Zn(2+).

It belongs to the endoribonuclease YbeY family. Zn(2+) serves as cofactor.

It localises to the cytoplasm. Single strand-specific metallo-endoribonuclease involved in late-stage 70S ribosome quality control and in maturation of the 3' terminus of the 16S rRNA. This chain is Endoribonuclease YbeY, found in Pseudomonas fluorescens (strain ATCC BAA-477 / NRRL B-23932 / Pf-5).